We begin with the raw amino-acid sequence, 373 residues long: Indole glucosinolate O-methyltransferase 2 (373 aa).

S-adenosyl-L-homocysteine-binding residues include Gly217, Asp240, Asp260, Met261, and Lys274. His278 acts as the Proton acceptor in catalysis.

It belongs to the class I-like SAM-binding methyltransferase superfamily. Cation-independent O-methyltransferase family.

It functions in the pathway secondary metabolite biosynthesis. Functionally, involved in indole glucosinolate biosynthesis. Catalyzes methoxylation reactions of the glucosinolate indole ring. Converts the hydroxy intermediates 4-hydroxy-indol-3-yl-methylglucosinolate (4OH-I3M) and 1-hydroxy-indol-3-yl-methylglucosinolate (1OH-I3M) to 4-methoxy-indol-3-yl-methylglucosinolate (4MO-I3M) and 1-methoxy-indol-3-yl-methylglucosinolate (1MO-I3M), respectively. This is Indole glucosinolate O-methyltransferase 2 from Arabidopsis thaliana (Mouse-ear cress).